Consider the following 251-residue polypeptide: Ditrans,polycis-undecaprenyl-diphosphate synthase ((2E,6E)-farnesyl-diphosphate specific) (251 aa).

The active site involves D21. D21 lines the Mg(2+) pocket. Residues 22 to 25 (GNNR), W26, H38, and 66 to 68 (SSE) each bind substrate. The active-site Proton acceptor is N69. Substrate-binding positions include W70, R72, R189, and 195-197 (RIS). E208 is a binding site for Mg(2+).

It belongs to the UPP synthase family. As to quaternary structure, homodimer. Mg(2+) serves as cofactor.

It carries out the reaction 8 isopentenyl diphosphate + (2E,6E)-farnesyl diphosphate = di-trans,octa-cis-undecaprenyl diphosphate + 8 diphosphate. In terms of biological role, catalyzes the sequential condensation of isopentenyl diphosphate (IPP) with (2E,6E)-farnesyl diphosphate (E,E-FPP) to yield (2Z,6Z,10Z,14Z,18Z,22Z,26Z,30Z,34E,38E)-undecaprenyl diphosphate (di-trans,octa-cis-UPP). UPP is the precursor of glycosyl carrier lipid in the biosynthesis of bacterial cell wall polysaccharide components such as peptidoglycan and lipopolysaccharide. In Pseudomonas putida (strain ATCC 47054 / DSM 6125 / CFBP 8728 / NCIMB 11950 / KT2440), this protein is Ditrans,polycis-undecaprenyl-diphosphate synthase ((2E,6E)-farnesyl-diphosphate specific).